We begin with the raw amino-acid sequence, 149 residues long: MKAVIQRVLNASVSVDDKIVSAIQQGYCILLGVGSDDTPEDVTKLSNKILKLKLFDNAEQPWKSTIADIQGEILCVSQFTLHARVNKGAKPDFHRSMKGPEAIELYEQVVKTLGESLGSDKIKKGVFGAMMNVQLVNNGPVTILYDTKE.

The Gly-cisPro motif, important for rejection of L-amino acids signature appears at 139–140; it reads GP.

This sequence belongs to the DTD family. In terms of assembly, homodimer.

Its subcellular location is the cytoplasm. The catalysed reaction is glycyl-tRNA(Ala) + H2O = tRNA(Ala) + glycine + H(+). The enzyme catalyses a D-aminoacyl-tRNA + H2O = a tRNA + a D-alpha-amino acid + H(+). In terms of biological role, an aminoacyl-tRNA editing enzyme that deacylates mischarged D-aminoacyl-tRNAs. Also deacylates mischarged glycyl-tRNA(Ala), protecting cells against glycine mischarging by AlaRS. Acts via tRNA-based rather than protein-based catalysis; rejects L-amino acids rather than detecting D-amino acids in the active site. By recycling D-aminoacyl-tRNA to D-amino acids and free tRNA molecules, this enzyme counteracts the toxicity associated with the formation of D-aminoacyl-tRNA entities in vivo and helps enforce protein L-homochirality. In Schizosaccharomyces pombe (strain 972 / ATCC 24843) (Fission yeast), this protein is D-aminoacyl-tRNA deacylase (dtd1).